A 316-amino-acid chain; its full sequence is Transaldolase (316 aa).

The active-site Schiff-base intermediate with substrate is Lys-132.

It belongs to the transaldolase family. Type 1 subfamily. Homodimer.

It is found in the cytoplasm. The enzyme catalyses D-sedoheptulose 7-phosphate + D-glyceraldehyde 3-phosphate = D-erythrose 4-phosphate + beta-D-fructose 6-phosphate. The protein operates within carbohydrate degradation; pentose phosphate pathway; D-glyceraldehyde 3-phosphate and beta-D-fructose 6-phosphate from D-ribose 5-phosphate and D-xylulose 5-phosphate (non-oxidative stage): step 2/3. Transaldolase is important for the balance of metabolites in the pentose-phosphate pathway. The polypeptide is Transaldolase (Aliivibrio fischeri (strain MJ11) (Vibrio fischeri)).